The primary structure comprises 146 residues: D-aminoacyl-tRNA deacylase (146 aa).

A Gly-cisPro motif, important for rejection of L-amino acids motif is present at residues 137-138 (GP).

Belongs to the DTD family. In terms of assembly, homodimer.

Its subcellular location is the cytoplasm. It carries out the reaction glycyl-tRNA(Ala) + H2O = tRNA(Ala) + glycine + H(+). The enzyme catalyses a D-aminoacyl-tRNA + H2O = a tRNA + a D-alpha-amino acid + H(+). In terms of biological role, an aminoacyl-tRNA editing enzyme that deacylates mischarged D-aminoacyl-tRNAs. Also deacylates mischarged glycyl-tRNA(Ala), protecting cells against glycine mischarging by AlaRS. Acts via tRNA-based rather than protein-based catalysis; rejects L-amino acids rather than detecting D-amino acids in the active site. By recycling D-aminoacyl-tRNA to D-amino acids and free tRNA molecules, this enzyme counteracts the toxicity associated with the formation of D-aminoacyl-tRNA entities in vivo and helps enforce protein L-homochirality. The sequence is that of D-aminoacyl-tRNA deacylase from Bacillus thuringiensis subsp. konkukian (strain 97-27).